We begin with the raw amino-acid sequence, 364 residues long: MSATYNFCAGPAMLPQAVMEKAQSELLDWNGLGTSVMEISHRSKEFIALTEQAEIDLRELMSIPSNYHVLFMHGGGRGQFSAVVNNFLGNNGKALYLVDGSWSSAAVDEAKKLAGETQIDTLNIVEKDGATSRVSIPNLKELDQDYRYLHYCPNETVDGIEIFEELDSPWPIVADMSSNIMSREIDVSRYGLIYAGAQKNIGPSGLSIVIVKDELLQLPQLPQSSIMDYRLGVKHGSMYNTPPTFAWYLAAEVFKWLKSSGGVGEVQKANERKAGTLYQFIDSCDFYENRVAVENRSVMNVTFYLKDEALNDEFIKQAKAVGLVALKGHRSVGGMRASIYNAMPLEGVEKLVEFMTDFANKNRA.

L-glutamate is bound at residue Arg-42. Pyridoxal 5'-phosphate is bound by residues 76–77 (GR), Trp-102, Thr-156, Asp-175, and Gln-198. Lys-199 is modified (N6-(pyridoxal phosphate)lysine). Position 240 to 241 (240 to 241 (NT)) interacts with pyridoxal 5'-phosphate.

Belongs to the class-V pyridoxal-phosphate-dependent aminotransferase family. SerC subfamily. As to quaternary structure, homodimer. The cofactor is pyridoxal 5'-phosphate.

Its subcellular location is the cytoplasm. The enzyme catalyses O-phospho-L-serine + 2-oxoglutarate = 3-phosphooxypyruvate + L-glutamate. It carries out the reaction 4-(phosphooxy)-L-threonine + 2-oxoglutarate = (R)-3-hydroxy-2-oxo-4-phosphooxybutanoate + L-glutamate. Its pathway is amino-acid biosynthesis; L-serine biosynthesis; L-serine from 3-phospho-D-glycerate: step 2/3. The protein operates within cofactor biosynthesis; pyridoxine 5'-phosphate biosynthesis; pyridoxine 5'-phosphate from D-erythrose 4-phosphate: step 3/5. Catalyzes the reversible conversion of 3-phosphohydroxypyruvate to phosphoserine and of 3-hydroxy-2-oxo-4-phosphonooxybutanoate to phosphohydroxythreonine. The polypeptide is Phosphoserine aminotransferase (Shewanella woodyi (strain ATCC 51908 / MS32)).